The following is a 151-amino-acid chain: UPF0178 protein VSAL_I0701 (151 aa).

It belongs to the UPF0178 family.

The chain is UPF0178 protein VSAL_I0701 from Aliivibrio salmonicida (strain LFI1238) (Vibrio salmonicida (strain LFI1238)).